Consider the following 529-residue polypeptide: Ribonuclease Y (529 aa).

The helical transmembrane segment at Gly-4–Tyr-24 threads the bilayer. In terms of domain architecture, KH spans Leu-216–Val-297. The HD domain maps to Ala-342–Gly-435.

The protein belongs to the RNase Y family.

The protein localises to the cell membrane. Functionally, endoribonuclease that initiates mRNA decay. This is Ribonuclease Y from Helicobacter pylori (strain J99 / ATCC 700824) (Campylobacter pylori J99).